Reading from the N-terminus, the 233-residue chain is Ion-translocating oxidoreductase complex subunit E (233 aa).

6 consecutive transmembrane segments (helical) span residues alanine 18 to alanine 38, leucine 39 to leucine 59, isoleucine 69 to alanine 89, phenylalanine 92 to isoleucine 112, alanine 128 to leucine 148, and proline 182 to glycine 202.

This sequence belongs to the NqrDE/RnfAE family. As to quaternary structure, the complex is composed of six subunits: RnfA, RnfB, RnfC, RnfD, RnfE and RnfG.

It is found in the cell inner membrane. Its function is as follows. Part of a membrane-bound complex that couples electron transfer with translocation of ions across the membrane. This Yersinia pseudotuberculosis serotype O:1b (strain IP 31758) protein is Ion-translocating oxidoreductase complex subunit E.